Reading from the N-terminus, the 494-residue chain is uncharacterized protein (494 aa).

It belongs to the TPP enzyme family.

This is an uncharacterized protein from Methanocaldococcus jannaschii (strain ATCC 43067 / DSM 2661 / JAL-1 / JCM 10045 / NBRC 100440) (Methanococcus jannaschii).